We begin with the raw amino-acid sequence, 370 residues long: tRNA-specific 2-thiouridylase MnmA (370 aa).

ATP is bound by residues 12–19 and Leu-38; that span reads GMSGGVDS. Cys-105 acts as the Nucleophile in catalysis. Cys-105 and Cys-204 are joined by a disulfide. Residue Gly-129 participates in ATP binding. The segment at 153–155 is interaction with tRNA; the sequence is KDQ. Cys-204 (cysteine persulfide intermediate) is an active-site residue. Positions 310–311 are interaction with tRNA; that stretch reads RY.

This sequence belongs to the MnmA/TRMU family.

Its subcellular location is the cytoplasm. The catalysed reaction is S-sulfanyl-L-cysteinyl-[protein] + uridine(34) in tRNA + AH2 + ATP = 2-thiouridine(34) in tRNA + L-cysteinyl-[protein] + A + AMP + diphosphate + H(+). Its function is as follows. Catalyzes the 2-thiolation of uridine at the wobble position (U34) of tRNA, leading to the formation of s(2)U34. The chain is tRNA-specific 2-thiouridylase MnmA from Desulfitobacterium hafniense (strain Y51).